Reading from the N-terminus, the 684-residue chain is Translation factor GUF1 homolog, mitochondrial (684 aa).

Residues 82-270 (HLIRNFSIIA…AVIERIPQPK (189 aa)) form the tr-type G domain. GTP is bound by residues 91–98 (AHVDHGKS), 163–167 (DTPGH), and 217–220 (NKID).

Belongs to the TRAFAC class translation factor GTPase superfamily. Classic translation factor GTPase family. LepA subfamily.

Its subcellular location is the mitochondrion inner membrane. The enzyme catalyses GTP + H2O = GDP + phosphate + H(+). Promotes mitochondrial protein synthesis. May act as a fidelity factor of the translation reaction, by catalyzing a one-codon backward translocation of tRNAs on improperly translocated ribosomes. Binds to mitochondrial ribosomes in a GTP-dependent manner. This chain is Translation factor GUF1 homolog, mitochondrial, found in Physcomitrium patens (Spreading-leaved earth moss).